Consider the following 98-residue polypeptide: MAKQNQDENLITLVDEQGNETLYQELFNFHSDDYDKSYILLIPAGSEPEEQVDVLAFAFNPDENDDSQDYELFDIESDEEWEMVEGVLDTFLNDENMR.

The protein belongs to the UPF0473 family.

The chain is UPF0473 protein LSL_1108 from Ligilactobacillus salivarius (strain UCC118) (Lactobacillus salivarius).